The following is a 177-amino-acid chain: Parathyroid hormone-related protein (177 aa).

An N-terminal signal peptide occupies residues 1 to 24 (MLRRLVQQWSVLVFLLSYSVPSRG). The propeptide occupies 25–34 (RSVEGLGRRL). Positions 57-68 (RFFLHHLIAEIH) are important for receptor binding. The tract at residues 74–177 (ATSEVSPNSK…TSLEPSSRTH (104 aa)) is disordered. The span at 76–90 (SEVSPNSKPAPNTKN) shows a compositional bias: polar residues. The Nuclear localization signal signature appears at 108-129 (TNKVETYKEQPLKTPGKKKKGK). Over residues 109-118 (NKVETYKEQP) the composition is skewed to basic and acidic residues. Over residues 122–132 (PGKKKKGKPGK) the composition is skewed to basic residues. Over residues 161–177 (PHTSPTSTSLEPSSRTH) the composition is skewed to low complexity.

The protein belongs to the parathyroid hormone family. In terms of assembly, PTHrP interacts with PTH1R (via N-terminal extracellular domain). Post-translationally, there are several secretory forms, including osteostatin, arising from endoproteolytic cleavage of the initial translation product. Each of these secretory forms is believed to have one or more of its own receptors that mediates the normal paracrine, autocrine and endocrine actions.

It is found in the secreted. The protein resides in the cytoplasm. The protein localises to the nucleus. In terms of biological role, neuroendocrine peptide which is a critical regulator of cellular and organ growth, development, migration, differentiation and survival and of epithelial calcium ion transport. Acts by binding to its receptor, PTH1R, activating G protein-coupled receptor signaling. Regulates endochondral bone development and epithelial-mesenchymal interactions during the formation of the mammary glands and teeth. Required for skeletal homeostasis. Promotes mammary mesenchyme differentiation and bud outgrowth by modulating mesenchymal cell responsiveness to BMPs. Up-regulates BMPR1A expression in the mammary mesenchyme and this increases the sensitivity of these cells to BMPs and allows them to respond to BMP4 in a paracrine and/or autocrine fashion. BMP4 signaling in the mesenchyme, in turn, triggers epithelial outgrowth and augments MSX2 expression, which causes the mammary mesenchyme to inhibit hair follicle formation within the nipple sheath. Potent inhibitor of osteoclastic bone resorption. The polypeptide is Parathyroid hormone-related protein (Pthlh) (Rattus norvegicus (Rat)).